The sequence spans 639 residues: C-type lectin domain-containing protein 160 (639 aa).

Residues 1 to 19 (MDLKSWILLSCTLLPLSVT) form the signal peptide. VWFA domains lie at 31–178 (DIII…VGIG) and 289–474 (DIIF…LCQV). Residues 491–618 (KYGECFFPTK…WNSVSCTSEY (128 aa)) enclose the C-type lectin domain. C594 and C614 are oxidised to a cystine.

It localises to the secreted. The sequence is that of C-type lectin domain-containing protein 160 (clec-160) from Caenorhabditis elegans.